The primary structure comprises 369 residues: 3-dehydroquinate synthase (369 aa).

NAD(+) contacts are provided by residues 70-75 (DAEDGK), 104-108 (GAATD), 128-129 (TT), lysine 141, lysine 150, and 168-171 (TLET). Glutamate 183, histidine 246, and histidine 262 together coordinate Zn(2+).

This sequence belongs to the sugar phosphate cyclases superfamily. Dehydroquinate synthase family. Co(2+) is required as a cofactor. The cofactor is Zn(2+). Requires NAD(+) as cofactor.

It localises to the cytoplasm. The enzyme catalyses 7-phospho-2-dehydro-3-deoxy-D-arabino-heptonate = 3-dehydroquinate + phosphate. Its pathway is metabolic intermediate biosynthesis; chorismate biosynthesis; chorismate from D-erythrose 4-phosphate and phosphoenolpyruvate: step 2/7. Catalyzes the conversion of 3-deoxy-D-arabino-heptulosonate 7-phosphate (DAHP) to dehydroquinate (DHQ). This is 3-dehydroquinate synthase from Rhodococcus erythropolis (strain PR4 / NBRC 100887).